We begin with the raw amino-acid sequence, 207 residues long: Outer-membrane lipoprotein LolB (207 aa).

The N-terminal stretch at 1–21 (MTLPDFRLIRLLPLASLVLTA) is a signal peptide. A lipid anchor (N-palmitoyl cysteine) is attached at cysteine 22. Residue cysteine 22 is the site of S-diacylglycerol cysteine attachment.

Belongs to the LolB family. As to quaternary structure, monomer.

It is found in the cell outer membrane. Its function is as follows. Plays a critical role in the incorporation of lipoproteins in the outer membrane after they are released by the LolA protein. The protein is Outer-membrane lipoprotein LolB of Salmonella schwarzengrund (strain CVM19633).